Here is a 353-residue protein sequence, read N- to C-terminus: Inactive ADP-ribosyltransferase ARH2 (353 aa).

The residue at position 27 (serine 27) is a Phosphoserine.

This sequence belongs to the ADP-ribosylglycohydrolase family. As to expression, expressed in the embryonic heart at E11.5.

It localises to the cytoplasm. It is found in the myofibril. Its subcellular location is the sarcomere. Functionally, required for myofibril assembly and outgrowth of the cardiac chambers in the developing heart. Appears to be catalytically inactive, showing no activity against O-acetyl-ADP-ribose. This is Inactive ADP-ribosyltransferase ARH2 (Adprhl1) from Mus musculus (Mouse).